The sequence spans 484 residues: Glycogen synthase (484 aa).

Lys-15 is an ADP-alpha-D-glucose binding site.

Belongs to the glycosyltransferase 1 family. Bacterial/plant glycogen synthase subfamily.

The catalysed reaction is [(1-&gt;4)-alpha-D-glucosyl](n) + ADP-alpha-D-glucose = [(1-&gt;4)-alpha-D-glucosyl](n+1) + ADP + H(+). Its pathway is glycan biosynthesis; glycogen biosynthesis. Synthesizes alpha-1,4-glucan chains using ADP-glucose. The protein is Glycogen synthase of Geotalea uraniireducens (strain Rf4) (Geobacter uraniireducens).